A 487-amino-acid chain; its full sequence is Beta-barrel assembly-enhancing protease (487 aa).

The N-terminal stretch at 1–27 (MFRQLKKNLVATLIAAMTIGQVAPAFA) is a signal peptide. His136 provides a ligand contact to Zn(2+). Glu137 is a catalytic residue. 2 residues coordinate Zn(2+): His140 and Glu201. The Proton donor role is filled by Asp205. 4 TPR repeats span residues 309-342 (RAAQYGRALQAMEANKYDEARKTLQPLLAAEPGN), 344-376 (WYLDLATDIDLGQNKANEAINRLKNARDLRTNP), 377-409 (VLQLNLANAYLQGGQPQEAANILNRYTFNNKDD), and 427-460 (DQELAARAEGYALAGRLDQAISLLSSASSQVKLG).

The protein belongs to the peptidase M48 family. BepA subfamily. In terms of assembly, interacts with BamA and LoiP. It depends on Zn(2+) as a cofactor.

The protein localises to the periplasm. Its activity is regulated as follows. Protease activity is inhibited by the metal chelating reagents 1,10-phenanthroline and EDTA. Functionally, functions both as a chaperone and a metalloprotease. Maintains the integrity of the outer membrane by promoting either the assembly or the elimination of outer membrane proteins, depending on their folding state. Promotes disulfide rearrangement of LptD during its biogenesis, and proteolytic degradation of LptD and BamA when their proper assembly is compromised. May facilitate membrane attachment of LoiP under unfavorable conditions. The chain is Beta-barrel assembly-enhancing protease from Escherichia coli (strain K12).